The primary structure comprises 367 residues: Chorismate synthase (367 aa).

NADP(+) contacts are provided by R48 and R54. Residues 125–127 (RSS), 238–239 (NA), G278, 293–297 (KPTSS), and R319 each bind FMN.

It belongs to the chorismate synthase family. As to quaternary structure, homotetramer. FMNH2 is required as a cofactor.

It carries out the reaction 5-O-(1-carboxyvinyl)-3-phosphoshikimate = chorismate + phosphate. It participates in metabolic intermediate biosynthesis; chorismate biosynthesis; chorismate from D-erythrose 4-phosphate and phosphoenolpyruvate: step 7/7. Functionally, catalyzes the anti-1,4-elimination of the C-3 phosphate and the C-6 proR hydrogen from 5-enolpyruvylshikimate-3-phosphate (EPSP) to yield chorismate, which is the branch point compound that serves as the starting substrate for the three terminal pathways of aromatic amino acid biosynthesis. This reaction introduces a second double bond into the aromatic ring system. This chain is Chorismate synthase, found in Stenotrophomonas maltophilia (strain K279a).